The primary structure comprises 383 residues: Anhydro-N-acetylmuramic acid kinase (383 aa).

An ATP-binding site is contributed by 9–16; it reads GTSLDGID.

This sequence belongs to the anhydro-N-acetylmuramic acid kinase family.

It catalyses the reaction 1,6-anhydro-N-acetyl-beta-muramate + ATP + H2O = N-acetyl-D-muramate 6-phosphate + ADP + H(+). It participates in amino-sugar metabolism; 1,6-anhydro-N-acetylmuramate degradation. The protein operates within cell wall biogenesis; peptidoglycan recycling. Catalyzes the specific phosphorylation of 1,6-anhydro-N-acetylmuramic acid (anhMurNAc) with the simultaneous cleavage of the 1,6-anhydro ring, generating MurNAc-6-P. Is required for the utilization of anhMurNAc either imported from the medium or derived from its own cell wall murein, and thus plays a role in cell wall recycling. The protein is Anhydro-N-acetylmuramic acid kinase of Bacillus cereus (strain ATCC 10987 / NRS 248).